A 191-amino-acid polypeptide reads, in one-letter code: MRLTDRRRPATDYRCRVPETSASDLVRSLLLTVPDFPQPGILFRDLTPVLADGAGLRAVVDNLVAAGGPVDAVAGVEARGFLLAAAAAYASGVGTLAVRKAGKLPGEVLRETYALEYGEAAIELHPGQLAPGSRVLLLDDVLATGGTLEAAARLLERAGYEVAGIGVVLELADLGGRARLAGHDVHAILSL.

This sequence belongs to the purine/pyrimidine phosphoribosyltransferase family. In terms of assembly, homodimer.

The protein resides in the cytoplasm. It catalyses the reaction AMP + diphosphate = 5-phospho-alpha-D-ribose 1-diphosphate + adenine. The protein operates within purine metabolism; AMP biosynthesis via salvage pathway; AMP from adenine: step 1/1. Its function is as follows. Catalyzes a salvage reaction resulting in the formation of AMP, that is energically less costly than de novo synthesis. This is Adenine phosphoribosyltransferase from Clavibacter sepedonicus (Clavibacter michiganensis subsp. sepedonicus).